Reading from the N-terminus, the 393-residue chain is Putative serpin-Z6A (393 aa).

Positions 336-360 (GTEAAAATAVLMEGAARYAPPPPPR) are RCL.

Belongs to the serpin family.

Functionally, probable serine protease inhibitor. This Oryza sativa subsp. japonica (Rice) protein is Putative serpin-Z6A.